The sequence spans 54 residues: uncharacterized protein (54 aa).

The chain crosses the membrane as a helical span at residues 21 to 43 (SYVVCLYMCGSDCACICVLACVV).

It is found in the membrane. This is an uncharacterized protein from Saccharomyces cerevisiae (strain ATCC 204508 / S288c) (Baker's yeast).